We begin with the raw amino-acid sequence, 266 residues long: 3-methyl-2-oxobutanoate hydroxymethyltransferase (266 aa).

2 residues coordinate Mg(2+): D45 and D84. Residues 45–46, D84, and K112 each bind 3-methyl-2-oxobutanoate; that span reads DS. E114 contributes to the Mg(2+) binding site. E181 acts as the Proton acceptor in catalysis.

The protein belongs to the PanB family. As to quaternary structure, homodecamer; pentamer of dimers. The cofactor is Mg(2+).

The protein resides in the cytoplasm. The enzyme catalyses 3-methyl-2-oxobutanoate + (6R)-5,10-methylene-5,6,7,8-tetrahydrofolate + H2O = 2-dehydropantoate + (6S)-5,6,7,8-tetrahydrofolate. It functions in the pathway cofactor biosynthesis; (R)-pantothenate biosynthesis; (R)-pantoate from 3-methyl-2-oxobutanoate: step 1/2. Catalyzes the reversible reaction in which hydroxymethyl group from 5,10-methylenetetrahydrofolate is transferred onto alpha-ketoisovalerate to form ketopantoate. The polypeptide is 3-methyl-2-oxobutanoate hydroxymethyltransferase (Stutzerimonas stutzeri (strain A1501) (Pseudomonas stutzeri)).